A 166-amino-acid polypeptide reads, in one-letter code: uncharacterized protein (166 aa).

It to C.perfringens pCP13 PCP12.

This is an uncharacterized protein from Clostridium perfringens.